A 251-amino-acid polypeptide reads, in one-letter code: MAKEVDPCDHGEVVDAGCVRAVLAELVLTFVFVFTGVAATMAAGVPEVAGAAMPMAALAGVAIATALAAGVLVTAGFHVSGGHLNPAVTVALLARGHITAFRSALYVAAQLLASSLACILLRYLTGGMATPVHTLGSGIGPMQGLVMEIILTFSLLFVVYATILDPRSSVPGFGPLLTGLIVGANTIAGGNFSGASMNPARSFGPALATGVWTHHWIYWLGPLIGGPLAGLVYESLFLVKRTHEPLLDNSF.

2 consecutive transmembrane segments (helical) span residues 26 to 46 and 57 to 77; these read LVLT…AGVP and ALAG…TAGF. Positions 85 to 87 match the NPA 1 motif; that stretch reads NPA. Transmembrane regions (helical) follow at residues 104–124, 144–164, and 170–190; these read ALYV…LRYL, GLVM…ATIL, and VPGF…IAGG. Residues 198–200 carry the NPA 2 motif; that stretch reads NPA. A helical transmembrane segment spans residues 219–239; it reads WLGPLIGGPLAGLVYESLFLV.

This sequence belongs to the MIP/aquaporin (TC 1.A.8) family. TIP (TC 1.A.8.10) subfamily. Expressed in roots, leaves and anthers.

Its subcellular location is the vacuole membrane. In terms of biological role, aquaporins facilitate the transport of water and small neutral solutes across cell membranes. May be involved in transport from the vacuolar compartment to the cytoplasm. The protein is Probable aquaporin TIP4-1 (TIP4-1) of Oryza sativa subsp. japonica (Rice).